Here is a 436-residue protein sequence, read N- to C-terminus: MTKPIVAIVGRPNVGKSTIFNRVVGERVSIVEDTPGVTRDRIYSSGEWLTHEFNIIDTGGIEIGDAPFQTQIRAQAEIAIDEADVIIFMVNVREGLTQSDEMVAQMLYKSKKPVVLAVNKVDNPEMRNDIFDFYSLGFGDPYPISGSHGLGLGDLLDEVVKHFDEETEDSYDEDTIRLSIIGRPNVGKSSLVNAILGEDRVIVSNVAGTTRDAVDTEYSYDGQDYVLIDTAGMRKKGKVYESTEKYSVLRALKAIERSNVVLIVIDAEEGIIEQDKRVAGYAHEEGKAVVIVVNKWDTVDKDSNTMKKFADDVRNQFQFLDYAQIAFVSAKEGTRLRTLFPYINEASENHKKRVQSSTLNEVVTDAISMNPTPTDKGRRLNVFYTTQVANEPPTFVVFVNDVELMHFSYKRYLENQIRHAFGFEGTPIHIIPRRRN.

2 EngA-type G domains span residues 4 to 167 (PIVA…DEET) and 176 to 351 (IRLS…ENHK). GTP is bound by residues 10–17 (GRPNVGKS), 57–61 (DTGGI), 119–122 (NKVD), 182–189 (GRPNVGKS), 229–233 (DTAGM), and 294–297 (NKWD). The 85-residue stretch at 352-436 (KRVQSSTLNE…PIHIIPRRRN (85 aa)) folds into the KH-like domain.

It belongs to the TRAFAC class TrmE-Era-EngA-EngB-Septin-like GTPase superfamily. EngA (Der) GTPase family. Associates with the 50S ribosomal subunit.

GTPase that plays an essential role in the late steps of ribosome biogenesis. This is GTPase Der from Staphylococcus haemolyticus (strain JCSC1435).